The sequence spans 182 residues: Ribulose bisphosphate carboxylase small subunit, chloroplastic 6 (182 aa).

Residues 1-41 (MAATMMSKTIISSKQCSKPIAPPKVSINKGFVNTSAAIKNR) constitute a chloroplast transit peptide.

Belongs to the RuBisCO small chain family. Heterohexadecamer of 8 large and 8 small subunits.

The protein localises to the plastid. The protein resides in the chloroplast. RuBisCO catalyzes two reactions: the carboxylation of D-ribulose 1,5-bisphosphate, the primary event in carbon dioxide fixation, as well as the oxidative fragmentation of the pentose substrate. Both reactions occur simultaneously and in competition at the same active site. Although the small subunit is not catalytic it is essential for maximal activity. This chain is Ribulose bisphosphate carboxylase small subunit, chloroplastic 6, found in Acetabularia peniculus (Green alga).